Reading from the N-terminus, the 955-residue chain is Translation initiation factor IF-2 (955 aa).

The segment at 49–352 is disordered; it reads AFSQSSESTE…QAPSFGGVKI (304 aa). A compositionally biased stretch (low complexity) spans 77 to 88; it reads PQQQTKASAPSA. Pro residues-rich tracts occupy residues 95–121, 149–159, 188–202, and 209–223; these read PAVPKPGPGLKPGPRPVPKPGPRPGPR, RPVPKPGPRPG, RPGPRPHPGMMPPRP, and PPRPQAPRPQAPRPG. Positions 225–235 are enriched in gly residues; it reads GTAGGRPGSSA. Residues 238–264 show a composition bias toward pro residues; that stretch reads PPRPVPRPGPRPSPMNMPASRPTPPGG. The segment covering 273-322 has biased composition (gly residues); that stretch reads SGGGRGRGGGGGAGPRGGGAGGGAPRTGFGGRPGGGRGRGGTAGAFGRPG. Residues 326 to 335 show a composition bias toward basic residues; the sequence is SRSRKSKKQR. Residues 448–620 form the tr-type G domain; it reads PRAPVVTVMG…IILTADAELD (173 aa). Residues 457–464 are G1; it reads GHVDHGKT. 457–464 provides a ligand contact to GTP; it reads GHVDHGKT. The G2 stretch occupies residues 482–486; it reads GITQH. A G3 region spans residues 507–510; sequence DTPG. GTP-binding positions include 507–511 and 561–564; these read DTPGH and NKID. Residues 561–564 form a G4 region; the sequence is NKID. The tract at residues 597 to 599 is G5; the sequence is SAK.

This sequence belongs to the TRAFAC class translation factor GTPase superfamily. Classic translation factor GTPase family. IF-2 subfamily.

The protein localises to the cytoplasm. Its function is as follows. One of the essential components for the initiation of protein synthesis. Protects formylmethionyl-tRNA from spontaneous hydrolysis and promotes its binding to the 30S ribosomal subunits. Also involved in the hydrolysis of GTP during the formation of the 70S ribosomal complex. The sequence is that of Translation initiation factor IF-2 from Thermobifida fusca (strain YX).